A 752-amino-acid polypeptide reads, in one-letter code: Double zinc ribbon and ankyrin repeat-containing protein 1 (752 aa).

S160 and S182 each carry phosphoserine. Positions 164-187 (IPAYGGGSGSRPPTRQSQSPGFAH) are disordered. Residues 174-183 (RPPTRQSQSP) show a composition bias toward polar residues. 2 consecutive DZANK-type zinc fingers follow at residues 211-270 (CAHC…CVVC) and 339-387 (CYRC…GSCG). ANK repeat units lie at residues 605-636 (ENRL…DPNC) and 640-669 (DNRP…DIDQ).

Interacts with NINL isoform 2. Associates with DYNC1H1 and multiple dynein intermediate and light chains as well as actin-binding proteins.

It localises to the cytoplasm. The protein resides in the cytoskeleton. The protein localises to the microtubule organizing center. Its subcellular location is the centrosome. It is found in the cilium basal body. In terms of biological role, involved in vesicle transport in photoreceptor cells. This Homo sapiens (Human) protein is Double zinc ribbon and ankyrin repeat-containing protein 1.